A 310-amino-acid chain; its full sequence is Putative S-adenosyl-L-methionine-dependent methyltransferase MUL_4762 (310 aa).

S-adenosyl-L-methionine is bound by residues aspartate 132 and 161–162 (DL).

This sequence belongs to the UPF0677 family.

In terms of biological role, exhibits S-adenosyl-L-methionine-dependent methyltransferase activity. In Mycobacterium ulcerans (strain Agy99), this protein is Putative S-adenosyl-L-methionine-dependent methyltransferase MUL_4762.